A 95-amino-acid polypeptide reads, in one-letter code: SMAD5 antisense gene protein 1 (95 aa).

2 disordered regions span residues 1-24 and 43-70; these read MHKQPKLLPPPATPPPPPQSSSWS and SSPTGLPKPHSPMPSPPEPEHSVGKPAN. Residues 7 to 19 are compositionally biased toward pro residues; that stretch reads LLPPPATPPPPPQ.

In terms of tissue distribution, expressed in fetal tissues.

The protein is SMAD5 antisense gene protein 1 (SMAD5-AS1) of Homo sapiens (Human).